Consider the following 38-residue polypeptide: Potassium channel toxin alpha-KTx 3.11 (38 aa).

Disulfide bonds link C8-C28, C14-C33, and C18-C35.

This sequence belongs to the short scorpion toxin superfamily. Potassium channel inhibitor family. Alpha-KTx 03 subfamily. In terms of tissue distribution, expressed by the venom gland.

It localises to the secreted. Blocks the voltage-gated potassium channel Kv1.3/KCNA3 (IC(50)=7.2 nM). Correnti and colleagues have also shown that this toxin inhibits Kv1.1/KCNA1, which is different from Abdel-Mottaleb and colleagues conclusions. This is Potassium channel toxin alpha-KTx 3.11 from Odontobuthus doriae (Yellow Iranian scorpion).